A 504-amino-acid chain; its full sequence is Glycerol kinase (504 aa).

Position 12 (Thr-12) interacts with ADP. ATP is bound by residues Thr-12, Thr-13, and Ser-14. A sn-glycerol 3-phosphate-binding site is contributed by Thr-12. ADP is bound at residue Arg-16. 4 residues coordinate sn-glycerol 3-phosphate: Arg-82, Glu-83, Tyr-134, and Asp-246. The glycerol site is built by Arg-82, Glu-83, Tyr-134, Asp-246, and Gln-247. ADP contacts are provided by Thr-268 and Gly-312. Thr-268, Gly-312, Gln-316, and Gly-413 together coordinate ATP. ADP is bound by residues Gly-413 and Asn-417.

It belongs to the FGGY kinase family.

It catalyses the reaction glycerol + ATP = sn-glycerol 3-phosphate + ADP + H(+). It functions in the pathway polyol metabolism; glycerol degradation via glycerol kinase pathway; sn-glycerol 3-phosphate from glycerol: step 1/1. With respect to regulation, inhibited by fructose 1,6-bisphosphate (FBP). In terms of biological role, key enzyme in the regulation of glycerol uptake and metabolism. Catalyzes the phosphorylation of glycerol to yield sn-glycerol 3-phosphate. This Pseudarthrobacter chlorophenolicus (strain ATCC 700700 / DSM 12829 / CIP 107037 / JCM 12360 / KCTC 9906 / NCIMB 13794 / A6) (Arthrobacter chlorophenolicus) protein is Glycerol kinase.